Consider the following 362-residue polypeptide: MNKTVVVAMSGGVDSSVVAYLLKKYTSYRVLGIFMKNWEEEDSNGLCSTAKDYEDVERVAEQLDIPYYTVSFAREYRERVFSRFLKEYSQGYTPNPDVLCNREIKFDLLQKKVVELGGDFLATGHYCRLDVKSQRVGLLRGKDPHKDQSYFLCGTHPESLKNVLFPLGDMTKREVRSIAAQAGLATAQKRDSTGICFIGKRPFKSFLEQFVPNVEGEIIDYDSQKIVGNHEGAHYYTIGQRRGLDIGGSEKPCYVVGKDMEKNIVYIVRGEDHPLLYQQELTAKELNWFVSPESITRCSAKVRYRSPDEECEILHTGTQDTVRVRFTSPVKAITPGQTIAFYDGERCLGGGIIEVAMTPHSV.

ATP-binding positions include 8 to 15 (AMSGGVDS) and Met35. The segment at 95–97 (NPD) is interaction with target base in tRNA. The Nucleophile role is filled by Cys100. An intrachain disulfide couples Cys100 to Cys196. Gly124 lines the ATP pocket. An interaction with tRNA region spans residues 146-148 (KDQ). Cys196 (cysteine persulfide intermediate) is an active-site residue. The tract at residues 303–304 (RY) is interaction with tRNA.

This sequence belongs to the MnmA/TRMU family.

The protein resides in the cytoplasm. It catalyses the reaction S-sulfanyl-L-cysteinyl-[protein] + uridine(34) in tRNA + AH2 + ATP = 2-thiouridine(34) in tRNA + L-cysteinyl-[protein] + A + AMP + diphosphate + H(+). In terms of biological role, catalyzes the 2-thiolation of uridine at the wobble position (U34) of tRNA, leading to the formation of s(2)U34. The chain is tRNA-specific 2-thiouridylase MnmA from Chlamydia abortus (strain DSM 27085 / S26/3) (Chlamydophila abortus).